The primary structure comprises 348 residues: D-erythrose-4-phosphate dehydrogenase (348 aa).

NAD(+) is bound by residues 12–13 (RI) and Arg-81. Residues 154-156 (SCT), Arg-200, 213-214 (TK), and Arg-236 each bind substrate. Cys-155 functions as the Nucleophile in the catalytic mechanism. Residue Asn-318 participates in NAD(+) binding.

This sequence belongs to the glyceraldehyde-3-phosphate dehydrogenase family. Epd subfamily. As to quaternary structure, homotetramer.

The protein localises to the cytoplasm. It carries out the reaction D-erythrose 4-phosphate + NAD(+) + H2O = 4-phospho-D-erythronate + NADH + 2 H(+). It functions in the pathway cofactor biosynthesis; pyridoxine 5'-phosphate biosynthesis; pyridoxine 5'-phosphate from D-erythrose 4-phosphate: step 1/5. Its function is as follows. Catalyzes the NAD-dependent conversion of D-erythrose 4-phosphate to 4-phosphoerythronate. The protein is D-erythrose-4-phosphate dehydrogenase of Salmonella dublin (strain CT_02021853).